A 379-amino-acid chain; its full sequence is Cytochrome b (379 aa).

4 helical membrane-spanning segments follow: residues F33–M53, W77–V98, W113–L133, and F178–L198. Positions 83 and 97 each coordinate heme b. Residues H182 and H196 each contribute to the heme b site. Residue H201 participates in a ubiquinone binding. 4 consecutive transmembrane segments (helical) span residues T226 to F246, L288 to N308, V320 to G340, and F347 to P367.

Belongs to the cytochrome b family. The cytochrome bc1 complex contains 11 subunits: 3 respiratory subunits (MT-CYB, CYC1 and UQCRFS1), 2 core proteins (UQCRC1 and UQCRC2) and 6 low-molecular weight proteins (UQCRH/QCR6, UQCRB/QCR7, UQCRQ/QCR8, UQCR10/QCR9, UQCR11/QCR10 and a cleavage product of UQCRFS1). This cytochrome bc1 complex then forms a dimer. Heme b serves as cofactor.

It is found in the mitochondrion inner membrane. In terms of biological role, component of the ubiquinol-cytochrome c reductase complex (complex III or cytochrome b-c1 complex) that is part of the mitochondrial respiratory chain. The b-c1 complex mediates electron transfer from ubiquinol to cytochrome c. Contributes to the generation of a proton gradient across the mitochondrial membrane that is then used for ATP synthesis. This chain is Cytochrome b (MT-CYB), found in Akodon reigi (Reig's grass mouse).